Reading from the N-terminus, the 101-residue chain is NADH-quinone oxidoreductase subunit K (101 aa).

3 helical membrane-spanning segments follow: residues leucine 4 to leucine 24, isoleucine 30 to phenylalanine 50, and isoleucine 61 to leucine 81.

This sequence belongs to the complex I subunit 4L family. As to quaternary structure, NDH-1 is composed of 14 different subunits. Subunits NuoA, H, J, K, L, M, N constitute the membrane sector of the complex.

The protein localises to the cell inner membrane. The enzyme catalyses a quinone + NADH + 5 H(+)(in) = a quinol + NAD(+) + 4 H(+)(out). Its function is as follows. NDH-1 shuttles electrons from NADH, via FMN and iron-sulfur (Fe-S) centers, to quinones in the respiratory chain. The immediate electron acceptor for the enzyme in this species is believed to be ubiquinone. Couples the redox reaction to proton translocation (for every two electrons transferred, four hydrogen ions are translocated across the cytoplasmic membrane), and thus conserves the redox energy in a proton gradient. This is NADH-quinone oxidoreductase subunit K from Burkholderia cenocepacia (strain HI2424).